A 598-amino-acid polypeptide reads, in one-letter code: Elongation factor 4 (598 aa).

One can recognise a tr-type G domain in the interval 4-186; that stretch reads INIRNFAIIA…AIVSRLPAPS (183 aa). Residues 16–21 and 133–136 contribute to the GTP site; these read DHGKST and NKID.

It belongs to the TRAFAC class translation factor GTPase superfamily. Classic translation factor GTPase family. LepA subfamily.

The protein resides in the cell inner membrane. It catalyses the reaction GTP + H2O = GDP + phosphate + H(+). In terms of biological role, required for accurate and efficient protein synthesis under certain stress conditions. May act as a fidelity factor of the translation reaction, by catalyzing a one-codon backward translocation of tRNAs on improperly translocated ribosomes. Back-translocation proceeds from a post-translocation (POST) complex to a pre-translocation (PRE) complex, thus giving elongation factor G a second chance to translocate the tRNAs correctly. Binds to ribosomes in a GTP-dependent manner. In Ehrlichia ruminantium (strain Welgevonden), this protein is Elongation factor 4.